Consider the following 36-residue polypeptide: Photosystem I reaction center subunit VIII (36 aa).

Residues 9-29 traverse the membrane as a helical segment; the sequence is ILVPLVGLVFPAIAMASLFLY.

It belongs to the PsaI family.

The protein localises to the plastid. The protein resides in the chloroplast thylakoid membrane. Its function is as follows. May help in the organization of the PsaL subunit. The protein is Photosystem I reaction center subunit VIII of Oltmannsiellopsis viridis (Marine flagellate).